Consider the following 281-residue polypeptide: Ribulose-5-phosphate-3-epimerase, chloroplastic (281 aa).

Residues 1 to 45 constitute a chloroplast transit peptide; the sequence is MSTSAASLCCSSTQVNGFGLRPERSLLYQPTSFSFSRRRTHGIVK. Residue Ser-63 participates in substrate binding. A divalent metal cation is bound by residues His-88, Asp-90, and His-121. The active-site Proton acceptor is Asp-90. Residues His-121, 199–202, 232–234, and 254–256 contribute to the substrate site; these read GFGG, DGG, and GSA. Asp-232 lines the a divalent metal cation pocket. Asp-232 serves as the catalytic Proton donor.

The protein belongs to the ribulose-phosphate 3-epimerase family. In terms of assembly, homooctamer. The cofactor is Co(2+). Fe(2+) is required as a cofactor. Mn(2+) serves as cofactor. Requires Zn(2+) as cofactor. In terms of tissue distribution, present in roots, seeds and flowers. Accumulates in nematode feeding sites (NFS).

The protein resides in the plastid. The protein localises to the chloroplast thylakoid membrane. The enzyme catalyses D-ribulose 5-phosphate = D-xylulose 5-phosphate. It participates in carbohydrate biosynthesis; Calvin cycle. Essential protein required during embryogenesis. Catalyzes the reversible epimerization of D-ribulose 5-phosphate to D-xylulose 5-phosphate. Essential for the early steps of nematode feeding sites (NFS, multinucleated root cells) formation induced by the root-knot nematodes Heterodera schachtii, Meloidogyne incognita, M.javanica and M.hapla. In Arabidopsis thaliana (Mouse-ear cress), this protein is Ribulose-5-phosphate-3-epimerase, chloroplastic.